A 217-amino-acid polypeptide reads, in one-letter code: uncharacterized protein (217 aa).

The first 32 residues, 1–32, serve as a signal peptide directing secretion; that stretch reads MPITKATPLFLRYRLKGFVFLTLLLVQGVFTA. The N-palmitoyl cysteine moiety is linked to residue Cys-33. Cys-33 carries the S-diacylglycerol cysteine lipid modification.

This sequence belongs to the MG067/MG068/MG395 family.

The protein localises to the cell membrane. This is an uncharacterized protein from Mycoplasma pneumoniae (strain ATCC 29342 / M129 / Subtype 1) (Mycoplasmoides pneumoniae).